Consider the following 219-residue polypeptide: Ribosome maturation factor RimP (219 aa).

Residues Glu195–Lys219 form a disordered region.

This sequence belongs to the RimP family.

The protein localises to the cytoplasm. In terms of biological role, required for maturation of 30S ribosomal subunits. The protein is Ribosome maturation factor RimP of Brucella abortus (strain S19).